The chain runs to 442 residues: Glycoprotein endo-alpha-1,2-mannosidase-like protein (442 aa).

At M1–A8 the chain is on the cytoplasmic side. The chain crosses the membrane as a helical; Signal-anchor for type II membrane protein span at residues C9–L29. Topologically, residues K30–M442 are lumenal.

It belongs to the glycosyl hydrolase 99 family.

It localises to the golgi apparatus membrane. This Danio rerio (Zebrafish) protein is Glycoprotein endo-alpha-1,2-mannosidase-like protein (maneal).